The primary structure comprises 1070 residues: Probable arabinosyltransferase C (1070 aa).

12 helical membrane-spanning segments follow: residues 10–32, 210–232, 247–269, 399–421, 425–442, 449–471, 512–534, 547–564, 574–596, 603–625, 645–664, and 685–707; these read IARL…TPFL, LLKT…ALHL, SRWW…WHFV, VATS…LFSG, IASI…LTIL, FGAV…LIFR, SVAR…AMSL, SRRI…MMFT, VFAG…AALR, VFAA…WWYV, TALL…FHFV, and SPIA…MAMI.

The protein belongs to the emb family.

The protein resides in the cell membrane. Its function is as follows. Arabinosyl transferase responsible for the polymerization of arabinose into the arabinan of arabinogalactan. In Mycobacterium leprae (strain TN), this protein is Probable arabinosyltransferase C (embC).